The following is a 144-amino-acid chain: Protein SprT-like (144 aa).

One can recognise a SprT-like domain in the interval 4-143 (NKYVQEVSLQ…GKCRGKLTLK (140 aa)). Histidine 64 is a Zn(2+) binding site. Glutamate 65 is an active-site residue. Histidine 68 is a binding site for Zn(2+).

The protein belongs to the SprT family. Zn(2+) serves as cofactor.

The protein resides in the cytoplasm. This Streptococcus suis (strain 98HAH33) protein is Protein SprT-like.